A 744-amino-acid polypeptide reads, in one-letter code: Deleted in azoospermia protein 1 (744 aa).

Residues 1 to 10 are compositionally biased toward polar residues; that stretch reads MSAANPETPN. Residues 1 to 27 are disordered; that stretch reads MSAANPETPNSTISREASTQSSSAAAS. Positions 11-27 are enriched in low complexity; it reads STISREASTQSSSAAAS. In terms of domain architecture, RRM 1 spans 40 to 115; it reads NTVFVGGIDA…KKLKLGPAIR (76 aa). Residues 163–175 show a composition bias toward polar residues; that stretch reads QHVQSAANPETPN. The disordered stretch occupies residues 163–192; the sequence is QHVQSAANPETPNSTISREASTQSSSAAAS. Low complexity predominate over residues 176–192; sequence STISREASTQSSSAAAS. The 76-residue stretch at 205 to 280 folds into the RRM 2 domain; sequence NTVFVGGIDA…KKLKLGPAIR (76 aa). Residues 328-340 show a composition bias toward polar residues; that stretch reads QHVQSAANPETPN. The interval 328 to 357 is disordered; the sequence is QHVQSAANPETPNSTISREASTQSSSAAAS. Residues 341–357 show a composition bias toward low complexity; that stretch reads STISREASTQSSSAAAS. Residues 370–445 enclose the RRM 3 domain; the sequence is NTVFVGGIDA…KKLKLGPAIR (76 aa). DAZ domains follow at residues 497-520, 521-544, 545-568, 569-592, 593-616, 617-640, 641-664, 665-688, and 689-712; these read AYSAYPHSPGQVITGCQLLVYNYQ, EYPTYPDSAFQVTTGYQLPVYNYQ, PFPAYPRSPFQVTAGYQLPVYNYQ, AFPAYPNSPFQVATGYQFPVYNYQ, PFPAYPSSPFQVTAGYQLPVYNYQ, AFPAYPNSPVQVTTGYQLPVYNYQ, AFPAYPSSPFQVTTGYQLPVYNYQ, and AFPAYPNSAVQVTTGYQFHVYNYQ.

Belongs to the RRM DAZ family. As to quaternary structure, forms a heterodimer with BOLL and DAZL. Interacts with PUM2, DAZAP1, DAZAP2, DZIP1 and DZIP3. Testis-specific. Expression restricted to premeiotic germ cells, particularly in spermatogonia (at protein level).

Its subcellular location is the cytoplasm. It is found in the nucleus. RNA-binding protein that plays an essential role in spermatogenesis. May act by binding to the 3'-UTR of mRNAs and regulating their translation. Promotes germ-cell progression to meiosis and formation of haploid germ cells. The polypeptide is Deleted in azoospermia protein 1 (DAZ1) (Homo sapiens (Human)).